We begin with the raw amino-acid sequence, 160 residues long: Putative pre-16S rRNA nuclease (160 aa).

Belongs to the YqgF nuclease family.

The protein localises to the cytoplasm. Could be a nuclease involved in processing of the 5'-end of pre-16S rRNA. This is Putative pre-16S rRNA nuclease from Cereibacter sphaeroides (strain KD131 / KCTC 12085) (Rhodobacter sphaeroides).